A 551-amino-acid chain; its full sequence is Interleukin-2 receptor subunit beta (551 aa).

The N-terminal stretch at 1-26 is a signal peptide; sequence MAAPALSWRLPLLILLLPLATPWASA. The Extracellular segment spans residues 27 to 240; sequence TVNGTSQFTC…TKPASLGKDT (214 aa). N-linked (GlcNAc...) asparagine glycans are attached at residues N29, N43, and N71. C36 and C46 form a disulfide bridge. Cysteines 74 and 86 form a disulfide. One can recognise a Fibronectin type-III domain in the interval 134–234; it reads APISLQVVHV…QPLAFRTKPA (101 aa). N149 carries N-linked (GlcNAc...) asparagine glycosylation. Positions 220–224 match the WSXWS motif motif; it reads WSPWS. The helical transmembrane segment at 241–265 threads the bilayer; the sequence is IPWLGHLLVGLSGAFGFIILVYLLI. The Cytoplasmic portion of the chain corresponds to 266–551; it reads NCRNTGPWLK…LQGQDPTHLV (286 aa). Positions 278–286 match the Box 1 motif motif; sequence LKCHTPDPS. Disordered regions lie at residues 393 to 412 and 433 to 476; these read DEGVAGAPTGSSPQPLQPLS and SLLG…GPPT.

Belongs to the type I cytokine receptor family. Type 4 subfamily. Non-covalent dimer of an alpha and a beta subunit. IL2R exists in 3 different forms: a high affinity dimer, an intermediate affinity monomer (beta subunit), and a low affinity monomer (alpha subunit). The high and intermediate affinity forms also associate with a gamma subunit. Interacts with SHB upon interleukin stimulation.

The protein localises to the cell membrane. It is found in the cell surface. Functionally, receptor for interleukin-2. This beta subunit is involved in receptor mediated endocytosis and transduces the mitogenic signals of IL2. Probably in association with IL15RA, involved in the stimulation of neutrophil phagocytosis by IL15. This chain is Interleukin-2 receptor subunit beta (IL2RB), found in Pan troglodytes (Chimpanzee).